We begin with the raw amino-acid sequence, 137 residues long: Large ribosomal subunit protein uL16c (137 aa).

Positions 1–17 (MLSPKKTRFRRQHRGRM) are enriched in basic residues. The tract at residues 1 to 21 (MLSPKKTRFRRQHRGRMKGLS) is disordered.

The protein belongs to the universal ribosomal protein uL16 family. As to quaternary structure, part of the 50S ribosomal subunit.

The protein resides in the plastid. This Cuscuta obtusiflora (Peruvian dodder) protein is Large ribosomal subunit protein uL16c.